A 699-amino-acid polypeptide reads, in one-letter code: Receptor-type tyrosine-protein phosphatase epsilon (699 aa).

A signal peptide spans 1–22; the sequence is MEPFCPLLLASFSLSLATAGQG. The segment covering 20-36 has biased composition (low complexity); it reads GQGNDTTPTESNWTSTT. Residues 20 to 41 form a disordered region; sequence GQGNDTTPTESNWTSTTAGPPD. N-linked (GlcNAc...) asparagine glycosylation is found at Asn23 and Asn31. Topologically, residues 23–47 are extracellular; sequence NDTTPTESNWTSTTAGPPDPGTSQP. Residues 48–68 form a helical membrane-spanning segment; it reads LLTWLLLPLLLLLFLLAAYFF. Over 69–699 the chain is Cytoplasmic; it reads RFRKQRKAVV…DIFSDYANFK (631 aa). Tyrosine-protein phosphatase domains are found at residues 134–393 and 425–688; these read FREE…LLEY and LEEE…VQDF. Residues Asp302, 334 to 340, and Gln378 each bind substrate; that span reads CSAGVGR. Catalysis depends on Cys334, which acts as the Phosphocysteine intermediate. Cys629 serves as the catalytic Phosphocysteine intermediate. Tyr695 is subject to Phosphotyrosine.

Belongs to the protein-tyrosine phosphatase family. Receptor class 4 subfamily. Monomer. Isoform 2: Homodimer. Can form oligomers. Dimerization is increased by oxidative stress and decreased by EGFR. Isoform 2 interacts with GRB2. A catalytically active cytoplasmic form (p65) is produced by proteolytic cleavage of either isoform 1, isoform 2 or isoform 3. In terms of processing, isoform 1 and isoform 2 are phosphorylated on tyrosine residues by tyrosine kinase Neu. Post-translationally, N-glycosylated. Isoform 1 is highly expressed in the brain, lung, spleen and testis. Isoform 2 is highly expressed in thymus, spleen and lung. Isoform 1 and isoform 2 are expressed in primary hepatocytes.

It localises to the cell membrane. The protein resides in the cytoplasm. It carries out the reaction O-phospho-L-tyrosyl-[protein] + H2O = L-tyrosyl-[protein] + phosphate. Its function is as follows. Isoform 1 plays a critical role in signaling transduction pathways and phosphoprotein network topology in red blood cells. May play a role in osteoclast formation and function. Acts as a negative regulator of insulin receptor (IR) signaling and is involved in insulin-induced glucose metabolism mainly through direct dephosphorylation and inactivation of IR in hepatocytes and liver. In terms of biological role, isoform 2 acts as a negative regulator of insulin receptor (IR) signaling in skeletal muscle. Regulates insulin-induced tyrosine phosphorylation of insulin receptor (IR) and insulin receptor substrate 1 (IRS-1), phosphorylation of protein kinase B and glycogen synthase kinase-3 and insulin induced stimulation of glucose uptake. Functionally, isoform 1 and isoform 2 act as a negative regulator of FceRI-mediated signal transduction leading to cytokine production and degranulation, most likely by acting at the level of SYK to affect downstream events such as phosphorylation of SLP76 and LAT and mobilization of Ca(2+). This chain is Receptor-type tyrosine-protein phosphatase epsilon (Ptpre), found in Rattus norvegicus (Rat).